The following is a 156-amino-acid chain: Homeobox-leucine zipper protein ATHB-52 (156 aa).

A DNA-binding region (homeobox) is located at residues 8-67; it reads GKNKKKRLTQDQVRQLEKCFTMNKKLEPDLKLQLSNQLGLPQRQVAVWFQNKRARFKTQS. Residues 68 to 96 are leucine-zipper; sequence LEVQHCTLQSKHEAALSDKAKLEHQVQFL.

It belongs to the HD-ZIP homeobox family. Class I subfamily. In terms of tissue distribution, expressed in roots and flowers.

Its subcellular location is the nucleus. Probable transcription factor. This chain is Homeobox-leucine zipper protein ATHB-52 (ATHB-52), found in Arabidopsis thaliana (Mouse-ear cress).